The sequence spans 285 residues: 2,3,4,5-tetrahydropyridine-2,6-dicarboxylate N-succinyltransferase (285 aa).

Substrate contacts are provided by Arg-111 and Asp-148.

The protein belongs to the transferase hexapeptide repeat family. In terms of assembly, homotrimer.

The protein resides in the cytoplasm. It catalyses the reaction (S)-2,3,4,5-tetrahydrodipicolinate + succinyl-CoA + H2O = (S)-2-succinylamino-6-oxoheptanedioate + CoA. It functions in the pathway amino-acid biosynthesis; L-lysine biosynthesis via DAP pathway; LL-2,6-diaminopimelate from (S)-tetrahydrodipicolinate (succinylase route): step 1/3. The polypeptide is 2,3,4,5-tetrahydropyridine-2,6-dicarboxylate N-succinyltransferase (Allorhizobium ampelinum (strain ATCC BAA-846 / DSM 112012 / S4) (Agrobacterium vitis (strain S4))).